A 164-amino-acid chain; its full sequence is ATP synthase subunit b 1 (164 aa).

A helical membrane pass occupies residues 8 to 28 (PETWVAIAFVILMGLFAYLGV).

It belongs to the ATPase B chain family. F-type ATPases have 2 components, F(1) - the catalytic core - and F(0) - the membrane proton channel. F(1) has five subunits: alpha(3), beta(3), gamma(1), delta(1), epsilon(1). F(0) has three main subunits: a(1), b(2) and c(10-14). The alpha and beta chains form an alternating ring which encloses part of the gamma chain. F(1) is attached to F(0) by a central stalk formed by the gamma and epsilon chains, while a peripheral stalk is formed by the delta and b chains.

It localises to the cell inner membrane. F(1)F(0) ATP synthase produces ATP from ADP in the presence of a proton or sodium gradient. F-type ATPases consist of two structural domains, F(1) containing the extramembraneous catalytic core and F(0) containing the membrane proton channel, linked together by a central stalk and a peripheral stalk. During catalysis, ATP synthesis in the catalytic domain of F(1) is coupled via a rotary mechanism of the central stalk subunits to proton translocation. Functionally, component of the F(0) channel, it forms part of the peripheral stalk, linking F(1) to F(0). The polypeptide is ATP synthase subunit b 1 (Bradyrhizobium sp. (strain ORS 278)).